Here is a 278-residue protein sequence, read N- to C-terminus: MQTYKVVVLGASGTGKTSLTVRFVNGDFVETYDPTIEDLYRKVIETNKGEHIMLEIMDTSGTERYLAMRDLYIRNAQAFVLVYSITSRVSLLELENIKNYICQVKDRPISQIPMVVLGNKCDLEDTRVVFPEEVEALTKKWGIEDFLETSAKIDMNIQSAYDCLTLQLMSKQSFLNGSSNGKDKKDKKEKKTHKKDSGSNNSSINSSSSSLSVSGGSNLSISSSCSSSSFSNLSNSTSSTSVNNLNQSQTNAPIRTKSKRSLKSAKVDKNPKGKCLIM.

10 to 17 lines the GTP pocket; sequence GASGTGKT. The Effector region motif lies at 32-40; sequence YDPTIEDLY. GTP-binding positions include 58 to 62 and 119 to 122; these read DTSGT and NKCD. Disordered stretches follow at residues 176–209 and 236–278; these read NGSSNGKDKKDKKEKKTHKKDSGSNNSSINSSSS and STSS…CLIM. 2 stretches are compositionally biased toward low complexity: residues 198–209 and 236–251; these read GSNNSSINSSSS and STSSTSVNNLNQSQTN. The residue at position 275 (Cys-275) is a Cysteine methyl ester. Cys-275 is lipidated: S-geranylgeranyl cysteine. A propeptide spans 276–278 (removed in mature form); that stretch reads LIM.

Belongs to the small GTPase superfamily. Ras family.

It localises to the cell membrane. The enzyme catalyses GTP + H2O = GDP + phosphate + H(+). In Dictyostelium discoideum (Social amoeba), this protein is Ras-related protein rapC (rapC).